Reading from the N-terminus, the 461-residue chain is Argininosuccinate lyase (461 aa).

Belongs to the lyase 1 family. Argininosuccinate lyase subfamily. Homotetramer.

The protein localises to the cytoplasm. The catalysed reaction is 2-(N(omega)-L-arginino)succinate = fumarate + L-arginine. It participates in amino-acid biosynthesis; L-arginine biosynthesis; L-arginine from L-ornithine and carbamoyl phosphate: step 3/3. The protein is Argininosuccinate lyase of Nostoc punctiforme (strain ATCC 29133 / PCC 73102).